Reading from the N-terminus, the 162-residue chain is 2-C-methyl-D-erythritol 2,4-cyclodiphosphate synthase (162 aa).

A divalent metal cation-binding residues include Asp12 and His14. 4-CDP-2-C-methyl-D-erythritol 2-phosphate-binding positions include 12–14 (DVH) and 38–39 (HS). His46 contacts a divalent metal cation. 4-CDP-2-C-methyl-D-erythritol 2-phosphate-binding positions include 60 to 62 (DIG), 65 to 69 (FPDTD), and Arg146.

It belongs to the IspF family. In terms of assembly, homotrimer. The cofactor is a divalent metal cation.

It catalyses the reaction 4-CDP-2-C-methyl-D-erythritol 2-phosphate = 2-C-methyl-D-erythritol 2,4-cyclic diphosphate + CMP. It participates in isoprenoid biosynthesis; isopentenyl diphosphate biosynthesis via DXP pathway; isopentenyl diphosphate from 1-deoxy-D-xylulose 5-phosphate: step 4/6. Involved in the biosynthesis of isopentenyl diphosphate (IPP) and dimethylallyl diphosphate (DMAPP), two major building blocks of isoprenoid compounds. Catalyzes the conversion of 4-diphosphocytidyl-2-C-methyl-D-erythritol 2-phosphate (CDP-ME2P) to 2-C-methyl-D-erythritol 2,4-cyclodiphosphate (ME-CPP) with a corresponding release of cytidine 5-monophosphate (CMP). This Bordetella avium (strain 197N) protein is 2-C-methyl-D-erythritol 2,4-cyclodiphosphate synthase.